The chain runs to 502 residues: Inosine-5'-monophosphate dehydrogenase 2 (502 aa).

S2 is modified (N-acetylserine). Residues 166–225 form the CBS domain; sequence MKSCENKDYYVPWDIDLDKIEAVLEDKQKGFVVLEKEGETVNVVTKDDVERVKGYPKLGS. NAD(+)-binding positions include 264 to 266 and 314 to 316; these read DSS and GMG. K(+)-binding residues include G316 and G318. IMP is bound at residue S319. C321 contacts K(+). C321 functions as the Thioimidate intermediate in the catalytic mechanism. Residues 354–356, 377–378, and 401–405 each bind IMP; these read DGG, GS, and YRGMG. R417 serves as the catalytic Proton acceptor. Position 429 (Q429) interacts with IMP. Residues E488, G489, and G490 each contribute to the K(+) site.

The protein belongs to the IMPDH/GMPR family. Homotetramer. K(+) serves as cofactor.

The protein localises to the cytoplasm. The enzyme catalyses IMP + NAD(+) + H2O = XMP + NADH + H(+). The protein operates within purine metabolism; XMP biosynthesis via de novo pathway; XMP from IMP: step 1/1. With respect to regulation, mycophenolic acid (MPA) is a non-competitive inhibitor that prevents formation of the closed enzyme conformation by binding to the same site as the amobile flap. In contrast, mizoribine monophosphate (MZP) is a competitive inhibitor that induces the closed conformation. MPA is a potent inhibitor of mammalian IMPDHs but a poor inhibitor of the bacterial enzymes. MZP is a more potent inhibitor of bacterial IMPDH. Functionally, catalyzes the conversion of inosine 5'-phosphate (IMP) to xanthosine 5'-phosphate (XMP), the first committed and rate-limiting step in the de novo synthesis of guanine nucleotides, and therefore plays an important role in the regulation of cell growth. The protein is Inosine-5'-monophosphate dehydrogenase 2 of Arabidopsis thaliana (Mouse-ear cress).